Here is a 175-residue protein sequence, read N- to C-terminus: Adenine phosphoribosyltransferase (175 aa).

The protein belongs to the purine/pyrimidine phosphoribosyltransferase family. As to quaternary structure, homodimer.

It is found in the cytoplasm. It catalyses the reaction AMP + diphosphate = 5-phospho-alpha-D-ribose 1-diphosphate + adenine. It functions in the pathway purine metabolism; AMP biosynthesis via salvage pathway; AMP from adenine: step 1/1. In terms of biological role, catalyzes a salvage reaction resulting in the formation of AMP, that is energically less costly than de novo synthesis. This chain is Adenine phosphoribosyltransferase, found in Synechococcus sp. (strain CC9902).